A 351-amino-acid chain; its full sequence is Amylovoran biosynthesis glycosyltransferase AmsD (351 aa).

It belongs to the glycosyltransferase group 1 family. Glycosyltransferase 4 subfamily.

The protein operates within glycan metabolism; exopolysaccharide biosynthesis. In terms of biological role, involved in the biosynthesis of amylovoran which functions as a virulence factor. May be involved in the formation of galactose alpha-1,6 linkages in amylovoran. The sequence is that of Amylovoran biosynthesis glycosyltransferase AmsD (amsD) from Erwinia amylovora (Fire blight bacteria).